A 762-amino-acid chain; its full sequence is Cellulose synthase-like protein H2 (762 aa).

The span at 1–15 (MAVVAAAAATGSTTR) shows a compositional bias: low complexity. The disordered stretch occupies residues 1–39 (MAVVAAAAATGSTTRSGGGGGEGTRSGRKKPPPPPLQER). 2 consecutive transmembrane segments (helical) span residues 47 to 67 (AWAW…LLAL) and 81 to 101 (GVWR…ALNV). Catalysis depends on residues aspartate 180 and aspartate 470. The next 6 helical transmembrane spans lie at 541 to 561 (LAYL…CYGL), 582 to 602 (FSVP…EYMA), 619 to 639 (IISV…SLGL), 673 to 693 (LPVF…VTVG), 708 to 728 (APGI…FPFV), and 739 to 759 (GIPW…VTFC).

The protein belongs to the glycosyltransferase 2 family. Plant cellulose synthase-like H subfamily.

The protein localises to the golgi apparatus membrane. Functionally, thought to be a Golgi-localized beta-glycan synthase that polymerize the backbones of noncellulosic polysaccharides (hemicelluloses) of plant cell wall. The sequence is that of Cellulose synthase-like protein H2 (CSLH2) from Oryza sativa subsp. indica (Rice).